The chain runs to 236 residues: Bacterial rhodopsin CSR3 (236 aa).

Over 1–3 (MDA) the chain is Extracellular. A helical transmembrane segment spans residues 4 to 25 (VAVVYGITAAGFAVGVAIVGYL). Residues 26–34 (YASLEGSEE) lie on the Cytoplasmic side of the membrane. A helical transmembrane segment spans residues 35–56 (RSILAALALIPGFAGISYVAMA). Topologically, residues 57 to 70 (FGIGTVTIGETTLV) are extracellular. Residues 71 to 92 (GFRYLDWVVTTPLLVGFVGYAA) form a helical membrane-spanning segment. Residues 93 to 95 (GAS) are Cytoplasmic-facing. Residues 96–118 (RRAIFGVMVADALMILTGVGAVV) form a helical membrane-spanning segment. The Extracellular segment spans residues 119-122 (ADGT). The chain crosses the membrane as a helical span at residues 123–150 (LKWVLFGVSTVFHVSLFAYLYLVFPRSV). The Cytoplasmic portion of the chain corresponds to 151-153 (PDD). Residues 154 to 181 (PQRIGLFSLLKNHIGLLWIAYPLVWLAG) form a helical membrane-spanning segment. At 182 to 189 (PEGLGLAT) the chain is on the extracellular side. The helical transmembrane segment at 190–222 (YVGVSITYAFLDLLAKVPYVYFFYARRQVFATK) threads the bilayer. Lys205 bears the N6-(retinylidene)lysine mark. Residues 223-236 (LLRDSGEVTATPAD) are Cytoplasmic-facing.

It belongs to the archaeal/bacterial/fungal opsin family.

The protein localises to the cell membrane. This is Bacterial rhodopsin CSR3 from Haloarcula vallismortis (Halobacterium vallismortis).